The primary structure comprises 476 residues: MAKEQVQAITKMEEDFAQWYTDIVKKAELVDYSSVKGCMILRPYGYALWENMQKVMDEKLKETGHENVYMPMFIPESLLQKEKDHVEGFAPEVAWVTHGGDEKLAERLCVRPTSETLFCEHFSKIVQSYNDLPKLYNQWCSVVRWEKTTRPFLRTTEFLWQEGHTIHETAEESQAETLNILNLYASFCEDYLAIPVIKGQKTEKEKFAGAKATYTIESLMHDGKALQTGTSHNFGTNFSEAFDIKFLDRNGKWQYVHQTSWGVSTRMIGGLIMVHSDNNGLVLPPKVAPVQVVIVPIAQHKEGVLAKATELQAHIQKVARVKIDASNKTPGWKFNEYEMKGIPIRLEVGPKDIEKNQVVLVRRDTKEKEFVPMDQLEERIPALLEEIHIALFNKAKAFRDENTYVATNFEEMKKIADEKQGFIKAMWCGELACEEKLKEEFGVSSRCMPFEQEHLAEECICCGKEAKQMVYWGKAY.

It belongs to the class-II aminoacyl-tRNA synthetase family. ProS type 3 subfamily. In terms of assembly, homodimer.

The protein resides in the cytoplasm. It catalyses the reaction tRNA(Pro) + L-proline + ATP = L-prolyl-tRNA(Pro) + AMP + diphosphate. Its function is as follows. Catalyzes the attachment of proline to tRNA(Pro) in a two-step reaction: proline is first activated by ATP to form Pro-AMP and then transferred to the acceptor end of tRNA(Pro). This chain is Proline--tRNA ligase 2, found in Bacillus cereus (strain ATCC 14579 / DSM 31 / CCUG 7414 / JCM 2152 / NBRC 15305 / NCIMB 9373 / NCTC 2599 / NRRL B-3711).